Here is a 273-residue protein sequence, read N- to C-terminus: 4-hydroxy-tetrahydrodipicolinate reductase (273 aa).

NAD(+) is bound by residues 12–17 (GAGGRM) and Glu38. Arg39 contributes to the NADP(+) binding site. NAD(+) is bound by residues 102-104 (GTT) and 126-129 (AANF). Residue His159 is the Proton donor/acceptor of the active site. (S)-2,3,4,5-tetrahydrodipicolinate is bound at residue His160. Lys163 serves as the catalytic Proton donor. Residue 169–170 (GT) participates in (S)-2,3,4,5-tetrahydrodipicolinate binding.

The protein belongs to the DapB family. Homotetramer.

It is found in the cytoplasm. The enzyme catalyses (S)-2,3,4,5-tetrahydrodipicolinate + NAD(+) + H2O = (2S,4S)-4-hydroxy-2,3,4,5-tetrahydrodipicolinate + NADH + H(+). It carries out the reaction (S)-2,3,4,5-tetrahydrodipicolinate + NADP(+) + H2O = (2S,4S)-4-hydroxy-2,3,4,5-tetrahydrodipicolinate + NADPH + H(+). It participates in amino-acid biosynthesis; L-lysine biosynthesis via DAP pathway; (S)-tetrahydrodipicolinate from L-aspartate: step 4/4. Catalyzes the conversion of 4-hydroxy-tetrahydrodipicolinate (HTPA) to tetrahydrodipicolinate. The polypeptide is 4-hydroxy-tetrahydrodipicolinate reductase (Salmonella dublin (strain CT_02021853)).